We begin with the raw amino-acid sequence, 94 residues long: DNA gyrase subunit A (94 aa).

The region spanning Leu-35–Ala-94 is the Topo IIA-type catalytic domain.

It belongs to the type II topoisomerase GyrA/ParC subunit family. In terms of assembly, heterotetramer, composed of two GyrA and two GyrB chains. In the heterotetramer, GyrA contains the active site tyrosine that forms a transient covalent intermediate with DNA, while GyrB binds cofactors and catalyzes ATP hydrolysis.

It localises to the cytoplasm. It catalyses the reaction ATP-dependent breakage, passage and rejoining of double-stranded DNA.. Functionally, a type II topoisomerase that negatively supercoils closed circular double-stranded (ds) DNA in an ATP-dependent manner to modulate DNA topology and maintain chromosomes in an underwound state. Negative supercoiling favors strand separation, and DNA replication, transcription, recombination and repair, all of which involve strand separation. Also able to catalyze the interconversion of other topological isomers of dsDNA rings, including catenanes and knotted rings. Type II topoisomerases break and join 2 DNA strands simultaneously in an ATP-dependent manner. The chain is DNA gyrase subunit A from Staphylococcus epidermidis.